The following is a 180-amino-acid chain: ATP-dependent protease subunit HslV (180 aa).

Residue threonine 7 is part of the active site. The Na(+) site is built by glycine 165, cysteine 168, and threonine 171.

Belongs to the peptidase T1B family. HslV subfamily. In terms of assembly, a double ring-shaped homohexamer of HslV is capped on each side by a ring-shaped HslU homohexamer. The assembly of the HslU/HslV complex is dependent on binding of ATP.

The protein resides in the cytoplasm. The catalysed reaction is ATP-dependent cleavage of peptide bonds with broad specificity.. With respect to regulation, allosterically activated by HslU binding. Functionally, protease subunit of a proteasome-like degradation complex believed to be a general protein degrading machinery. The polypeptide is ATP-dependent protease subunit HslV (Bacillus anthracis (strain A0248)).